The sequence spans 330 residues: DNA-directed RNA polymerase subunit alpha (330 aa).

Residues 1-232 (MAILAFQKPD…YHFMLFSDEK (232 aa)) form an alpha N-terminal domain (alpha-NTD) region. Residues 248–330 (EEVLHMRQLL…DISKYKLDKE (83 aa)) are alpha C-terminal domain (alpha-CTD).

Belongs to the RNA polymerase alpha chain family. In terms of assembly, homodimer. The RNAP catalytic core consists of 2 alpha, 1 beta, 1 beta' and 1 omega subunit. When a sigma factor is associated with the core the holoenzyme is formed, which can initiate transcription.

It catalyses the reaction RNA(n) + a ribonucleoside 5'-triphosphate = RNA(n+1) + diphosphate. Its function is as follows. DNA-dependent RNA polymerase catalyzes the transcription of DNA into RNA using the four ribonucleoside triphosphates as substrates. The polypeptide is DNA-directed RNA polymerase subunit alpha (Bacteroides thetaiotaomicron (strain ATCC 29148 / DSM 2079 / JCM 5827 / CCUG 10774 / NCTC 10582 / VPI-5482 / E50)).